The primary structure comprises 418 residues: Glutamyl-tRNA(Gln) amidotransferase subunit D (418 aa).

Residues Lys74–Asp405 enclose the Asparaginase/glutaminase domain. Active-site residues include Thr84, Thr160, Asp161, and Lys237.

It belongs to the asparaginase 1 family. GatD subfamily. As to quaternary structure, heterodimer of GatD and GatE.

The enzyme catalyses L-glutamyl-tRNA(Gln) + L-glutamine + ATP + H2O = L-glutaminyl-tRNA(Gln) + L-glutamate + ADP + phosphate + H(+). Its function is as follows. Allows the formation of correctly charged Gln-tRNA(Gln) through the transamidation of misacylated Glu-tRNA(Gln) in organisms which lack glutaminyl-tRNA synthetase. The reaction takes place in the presence of glutamine and ATP through an activated gamma-phospho-Glu-tRNA(Gln). The GatDE system is specific for glutamate and does not act on aspartate. This is Glutamyl-tRNA(Gln) amidotransferase subunit D from Methanococcus maripaludis (strain C7 / ATCC BAA-1331).